Consider the following 115-residue polypeptide: Large ribosomal subunit protein uL22 (115 aa).

The protein belongs to the universal ribosomal protein uL22 family. As to quaternary structure, part of the 50S ribosomal subunit.

Its function is as follows. This protein binds specifically to 23S rRNA; its binding is stimulated by other ribosomal proteins, e.g. L4, L17, and L20. It is important during the early stages of 50S assembly. It makes multiple contacts with different domains of the 23S rRNA in the assembled 50S subunit and ribosome. The globular domain of the protein is located near the polypeptide exit tunnel on the outside of the subunit, while an extended beta-hairpin is found that lines the wall of the exit tunnel in the center of the 70S ribosome. This Enterococcus faecalis (strain ATCC 700802 / V583) protein is Large ribosomal subunit protein uL22.